A 638-amino-acid chain; its full sequence is Sodium- and chloride-dependent glycine transporter 1 (638 aa).

The tract at residues 1–30 (MAVAHGPVATSSPEQNGAVPSEATKKDQNL) is disordered. At 1–40 (MAVAHGPVATSSPEQNGAVPSEATKKDQNLTRGNWGNQIE) the chain is on the cytoplasmic side. Transmembrane regions (helical) follow at residues 41–61 (FVLT…FPYL), 68–88 (GAFM…LFFM), and 120–140 (VSTY…YYFF). At 141-217 (SSMTHVLPWA…LSDDIGDFGE (77 aa)) the chain is on the extracellular side. N-linked (GlcNAc...) asparagine glycosylation is found at Asn169, Asn172, Asn182, and Asn188. Helical transmembrane passes span 218–238 (VRLP…LCLI), 247–267 (VVYF…VRGV), 292–312 (VWGD…GGLI), 339–359 (SVYA…HLGV), 382–402 (LLPI…LLGL), 438–458 (VAGF…WLLL), 462–482 (YAAS…IMYI), 502–522 (LFFQ…ILIF), and 542–562 (VAIG…YALF). The Cytoplasmic segment spans residues 563-638 (QLCRTDGDTL…GSSRLQDSRI (76 aa)). Thr603 is modified (phosphothreonine). Residues Ser605 and Ser630 each carry the phosphoserine modification. Positions 627-638 (SNGSSRLQDSRI) are essential for interaction with EXOC1.

This sequence belongs to the sodium:neurotransmitter symporter (SNF) (TC 2.A.22) family. SLC6A9 subfamily. In terms of assembly, interacts with EXOC1; interaction increases the transporter capacity of SLC6A9 probably by promoting its insertion into the cell membrane. Interacts with EXOC3 and EXOC4. In terms of tissue distribution, found only in the white matter of the CNS. Found in the gray matter of CNS as well as in macrophages and mast cells in peripheral tissues.

The protein localises to the cell membrane. The catalysed reaction is glycine(out) + chloride(out) + 2 Na(+)(out) = glycine(in) + chloride(in) + 2 Na(+)(in). With respect to regulation, inhibited by sarcosine. In terms of biological role, sodium- and chloride-dependent glycine transporter. Essential for regulating glycine concentrations at inhibitory glycinergic synapses. This chain is Sodium- and chloride-dependent glycine transporter 1 (Slc6a9), found in Rattus norvegicus (Rat).